The following is a 399-amino-acid chain: Elongation factor Tu (399 aa).

Residues 10 to 204 form the tr-type G domain; sequence KDHVNIGTIG…AVDDYIDTPE (195 aa). The segment at 19–26 is G1; the sequence is GHVDHGKT. GTP is bound at residue 19–26; sequence GHVDHGKT. T26 is a Mg(2+) binding site. Positions 60–64 are G2; that stretch reads GITIN. The interval 81–84 is G3; it reads DCPG. GTP contacts are provided by residues 81-85 and 136-139; these read DCPGH and NKKD. The interval 136–139 is G4; sequence NKKD. Residues 174–176 are G5; sequence SAL.

The protein belongs to the TRAFAC class translation factor GTPase superfamily. Classic translation factor GTPase family. EF-Tu/EF-1A subfamily. As to quaternary structure, monomer.

Its subcellular location is the cytoplasm. It carries out the reaction GTP + H2O = GDP + phosphate + H(+). In terms of biological role, GTP hydrolase that promotes the GTP-dependent binding of aminoacyl-tRNA to the A-site of ribosomes during protein biosynthesis. The protein is Elongation factor Tu of Synechocystis sp. (strain ATCC 27184 / PCC 6803 / Kazusa).